A 1958-amino-acid polypeptide reads, in one-letter code: MEFPFGSVGTTNFRRFTPESLAEIEKQIAAHRAAKKGRPKQRGQKDKSEKPRPQLDLKACNQLPRFYGELPAELVGEPLEDLDPFYSTHRTFIVLDKSRTISRFSATWALWLFSPFNLIRRTAIKVSVHSWFSIFITVTILVNCVCMTRTDLPEKLEYAFTVVYTFEALIKILARGFCLNEFTYLRDPWNWLDFSVITLAYVGAAIDLRGISGLRTFRVLRALKTVSVIPGLKVIVGALIHSVRKLADVTILTVFCLSVFALVGLQLFKGNLKNKCIKNGTDPHKADNLSSEMAGDIFIKPGTTDPLLCGNGSDAGHCPNDYVCRKTSDNPDFNYTSFDSFAWAFLSLFRLMTQDSWERLYQQTLRASGKMYMVFFVLVIFLGSFYLVNLILAVVTMAYEEQSQATIAEIEAKEKKFKEALEVLQKEQEVLAALGIDTTSLYSHNGSPLAPKNANERRPRVKSRMSEGSTDDNRSLQSDPYNQRRMSFLGLSSGRRRASHSSVFHFRAPSQDVSFPDGILDDGVFHGDQESRRSSILLGRGAGQAGPLPRSPLPQSPNPGPRRGEEGQRGVPTGELATGAPEGPALDAAGQKNFLSADYLNEPFRAQRAMSVVSIMTSVIEELEESKLKCPPCLISLAQKYLIWECCPKWKKFKMVLFELVTDPFAELTITLCIVVNTVFMAMEHYPMTDAFDAMLQAGNIVFTVFFTMEMAFKIIAFDPYYYFQKKWNIFDCVIVTVSLLELSTSKKGSLSVLRTFRLLRVFKLAKSWPTLNMLIKIIGNSVGALGNLTFILAIIVFIFALVGKQLLSENYGCRRDGISVWNGERLRWHMCDFFHSFLVVFRILCGEWIENMWVCMEVSQDYICLTLFLTVMVLGNLVVLNLFIALLLNSFSADNLTAPEDDGEVNNLQVALARIQVFGHRASRAITSYIRSHCRLRWPKVETQLGMKPPLTSCKAENHIATDAVNAAVGNLAKPALGGPKENHGDFITDPNVWVSVPIAEGESDLDELEEDVEHASQSSWQEESPKGQQELLQQVQKCEDHQAARSPPSGMSSEDLAPYLGERWQREESPRVPAEGVDDTSSSEGSTVDCPDPEEILRKIPELAEELDEPDDCFPEGCTRRCPCCKVNTSKFPWATGWQVRKTCYRIVEHSWFESFIIFMILLSSGALAFEDNYLEEKPRVKSVLEYTDRVFTFIFVFEMLLKWVAYGFKKYFTNAWCWLDFLIVNISLTSLIAKILEYSDVASIKALRTLRALRPLRALSRFEGMRVVVDALVGAIPSIMNVLLVCLIFWLIFSIMGVNLFAGKFSRCVDTRSNPFSVVNSTFVTNKSDCYNQNNTGHFFWVNVKVNFDNVAMGYLALLQVATFKGWMDIMYAAVDSRDINSQPNWEESLYMYLYFVVFIIFGGFFTLNLFVGVIIDNFNQQKKKLGGQDIFMTEEQKKYYNAMKKLGSKKPQKPIPRPLNKYQGFVFDIVTRQAFDIIIMALICLNMITMMVETDNQSEEKTKVLGRINQFFVAVFTGECVMKMFALRQYYFTNGWNVFDFIVVILSISSLLFSAILSSLESYFSPTLLRVIRLARIGRILRLIRAAKGIRTLLFALMMSLPALFNIGLLLFLVMFIYSIFGMASFANVIDEAGIDDMFNFKTFGNSMLCLFQITTSAGWDGLLSPILNTGPPYCDPNRPNSNGSKGNCGSPAVGILFFTTYIIISFLIVVNMYIAVILENFNVATEESTEPLSEDDFDMFYETWEKFDPEATQFIAFSALSDFADTLSGPLRIPKPNQNILIQMDLPLVPGDKIHCLDILFAFTKNVLGESGELDSLKTNMEEKFMATNLSKASYEPIATTLRCKQEDISATIIQKAYRNYMLQRSLMLSNPLHVPRAEEDGVSLPREGYVTFMANDNGGLPDKSETASATSFPPSYDSVTRGLSDRANISTSSSMQNEDEVTAKEGKSPGPQ.

Over Met1 to Lys125 the chain is Cytoplasmic. The disordered stretch occupies residues Gln27–Gln54. The segment covering Arg32 to Arg42 has biased composition (basic residues). Positions Gly43–Gln54 are enriched in basic and acidic residues. The I repeat unit spans residues Phe116–Gln404. Residues Val126–Arg149 form a helical membrane-spanning segment. Residues Thr150–Glu154 are Extracellular-facing. Residues Lys155 to Ala174 traverse the membrane as a helical segment. Residues Arg175–Asp187 are Cytoplasmic-facing. Residues Pro188–Ile206 form a helical membrane-spanning segment. Residues Asp207–Ser212 are Extracellular-facing. The chain crosses the membrane as a helical; Voltage-sensor span at residues Gly213 to Leu232. At Lys233 to Asp248 the chain is on the cytoplasmic side. The helical transmembrane segment at Val249–Leu272 threads the bilayer. Topologically, residues Lys273–Ser340 are extracellular. Residues Cys276 and Cys318 are joined by a disulfide bond. Residues Asn279, Asn288, Asn311, and Asn334 are each glycosylated (N-linked (GlcNAc...) asparagine). The segment at residues Phe341 to Leu365 is an intramembrane region (pore-forming). The Extracellular segment spans residues Arg366 to Tyr372. Residues Met373 to Ala398 traverse the membrane as a helical segment. The Cytoplasmic portion of the chain corresponds to Tyr399–Phe658. Residues Ser440, Ser443, Ser466, and Ser478 each carry the phosphoserine modification. 2 disordered regions span residues His444 to Gln483 and Gly539 to Gly583. The segment covering Pro549–Gly560 has biased composition (pro residues). Ser611 and Ser614 each carry phosphoserine. The stretch at Cys646 to Gln910 is one II repeat. Residues Glu659–Met683 traverse the membrane as a helical segment. At Glu684–Ala694 the chain is on the extracellular side. A helical transmembrane segment spans residues Met695–Phe718. The Cytoplasmic portion of the chain corresponds to Asp719–Lys726. A helical membrane pass occupies residues Lys727–Ser746. Residues Lys747–Ser752 lie on the Extracellular side of the membrane. Residues Val753–Leu772 form a helical; Voltage-sensor membrane-spanning segment. Residues Asn773–Asn788 are Cytoplasmic-facing. The chain crosses the membrane as a helical span at residues Leu789–Ser809. Residues Glu810–Asp833 are Extracellular-facing. An intramembrane region (pore-forming) is located at residues Phe834–Trp854. At Val855–Tyr863 the chain is on the extracellular side. Cysteines 856 and 865 form a disulfide. A helical membrane pass occupies residues Ile864 to Leu889. Topologically, residues Asn890–Arg1148 are cytoplasmic. The disordered stretch occupies residues Asp1006–Asp1094. Residues Ala1017–Gln1038 show a composition bias toward polar residues. One copy of the III repeat lies at Gln1141–Leu1450. Residues Ile1149–Phe1172 form a helical membrane-spanning segment. Residues Glu1173–Ser1185 are Extracellular-facing. The helical transmembrane segment at Val1186–Phe1211 threads the bilayer. Residues Lys1212–Asn1217 lie on the Cytoplasmic side of the membrane. Residues Ala1218–Leu1239 traverse the membrane as a helical segment. Residues Glu1240–Asp1243 are Extracellular-facing. Residues Val1244 to Phe1265 traverse the membrane as a helical; Voltage-sensor segment. Over Glu1266–Asn1284 the chain is Cytoplasmic. The chain crosses the membrane as a helical span at residues Val1285–Val1312. Residues Asp1313–Val1354 lie on the Extracellular side of the membrane. Residues Asn1323, Asn1329, and Asn1337 are each glycosylated (N-linked (GlcNAc...) asparagine). Residues Ala1355 to Ala1376 constitute an intramembrane region (pore-forming). At Ala1377–Ser1392 the chain is on the extracellular side. The chain crosses the membrane as a helical span at residues Leu1393–Ile1419. Residues Asp1420–Asp1472 are Cytoplasmic-facing. Position 1452 is a phosphoserine; by PKC (Ser1452). The stretch at Ile1459 to Gln1758 is one IV repeat. A helical membrane pass occupies residues Ile1473 to Val1496. The Extracellular portion of the chain corresponds to Glu1497–Lys1507. Asn1500 carries N-linked (GlcNAc...) asparagine glycosylation. A helical transmembrane segment spans residues Val1508 to Leu1531. Over Arg1532 to Thr1537 the chain is Cytoplasmic. The chain crosses the membrane as a helical span at residues Asn1538–Leu1561. The Extracellular segment spans residues Ser1562 to Leu1573. Residues Arg1574 to Arg1595 traverse the membrane as a helical; Voltage-sensor segment. At Thr1596–Asn1610 the chain is on the cytoplasmic side. Residues Ile1611–Val1633 traverse the membrane as a helical segment. The Extracellular portion of the chain corresponds to Ile1634–Thr1647. Positions Phe1648–Pro1670 form an intramembrane region, pore-forming. Over Ile1671–Val1698 the chain is Extracellular. Asn1687 is a glycosylation site (N-linked (GlcNAc...) asparagine). The helical transmembrane segment at Gly1699–Leu1723 threads the bilayer. The Cytoplasmic segment spans residues Glu1724–Gln1958. One can recognise an IQ domain in the interval Glu1852–Pro1881. Positions Asn1901–Gln1958 are disordered. Over residues Ala1933–Gln1942 the composition is skewed to polar residues. Residues Val1947–Gln1958 show a composition bias toward basic and acidic residues.

This sequence belongs to the sodium channel (TC 1.A.1.10) family. Nav1.8/SCN10A subfamily. As to quaternary structure, the channel consists of an ion conducting pore forming alpha-subunit regulated by one or more associated auxiliary subunits SCN1B, SCN2B and SCN3B; electrophysiological properties may vary depending on the type of the associated beta subunits. Found in a number of complexes with PRX, DYNLT1 and PDZD2. Interacts with proteins such as FSTL1, PRX, DYNLT1, PDZD2, S100A10 and many others. Interacts with NEDD4 and NEDD4L. In terms of processing, ubiquitinated by NEDD4L; which promotes its endocytosis. Phosphorylation at Ser-1452 by PKC in a highly conserved cytoplasmic loop slows inactivation of the sodium channel and reduces peak sodium currents. Post-translationally, lacks the cysteine which covalently binds the conotoxin GVIIJ. This cysteine (position 815) is speculated in other sodium channel subunits alpha to be implied in covalent binding with the sodium channel subunit beta-2 or beta-4. Expressed in dorsal root ganglion and trigeminal ganglion.

It is found in the cell membrane. The catalysed reaction is Na(+)(in) = Na(+)(out). Its function is as follows. Tetrodotoxin-resistant channel that mediates the voltage-dependent sodium ion permeability of excitable membranes. Assuming opened or closed conformations in response to the voltage difference across the membrane, the protein forms a sodium-selective channel through which sodium ions may pass in accordance with their electrochemical gradient. Plays a role in neuropathic pain mechanisms. This chain is Sodium channel protein type 10 subunit alpha, found in Mus musculus (Mouse).